The following is a 257-amino-acid chain: Major prion protein (257 aa).

The N-terminal stretch at 1–24 (MVKSHIGGWILVLFVAAWSDIGLC) is a signal peptide. An interaction with GRB2, ERI3 and SYN1 region spans residues 25–234 (KKRPKPGGGW…EYEAYAQRGA (210 aa)). The segment at 28–113 (PKPGGGWNTG…NKPSKPKTNM (86 aa)) is disordered. Repeat copies occupy residues 54 to 62 (PQGGGGWGQ), 63 to 70 (PHGGGWGQ), 71 to 78 (PHGGGWGQ), 79 to 86 (PHGGGWGQ), and 87 to 95 (PHGGGGWGQ). The 5 X 8 AA tandem repeats of P-H-G-G-G-W-G-Q stretch occupies residues 54-95 (PQGGGGWGQPHGGGWGQPHGGGWGQPHGGGWGQPHGGGGWGQ). The span at 55-100 (QGGGGWGQPHGGGWGQPHGGGWGQPHGGGWGQPHGGGGWGQGGGSH) shows a compositional bias: gly residues. Residues histidine 64, glycine 65, glycine 66, histidine 72, glycine 73, glycine 74, histidine 80, glycine 81, glycine 82, histidine 88, glycine 90, and glycine 91 each contribute to the Cu(2+) site. Cysteine 183 and cysteine 218 are disulfide-bonded. 2 N-linked (GlcNAc...) asparagine glycosylation sites follow: asparagine 185 and asparagine 201. Alanine 234 carries GPI-anchor amidated alanine lipidation. The propeptide at 235–257 (SVILFSSPPVILLISFLLFLIVG) is removed in mature form.

It belongs to the prion family. In terms of assembly, monomer and homodimer. Has a tendency to aggregate into amyloid fibrils containing a cross-beta spine, formed by a steric zipper of superposed beta-strands. Soluble oligomers may represent an intermediate stage on the path to fibril formation. Copper binding may promote oligomerization. Interacts with GRB2, APP, ERI3/PRNPIP and SYN1. Mislocalized cytosolically exposed PrP interacts with MGRN1; this interaction alters MGRN1 subcellular location and causes lysosomal enlargement. Interacts with KIAA1191.

It localises to the cell membrane. The protein resides in the golgi apparatus. Its primary physiological function is unclear. Has cytoprotective activity against internal or environmental stresses. May play a role in neuronal development and synaptic plasticity. May be required for neuronal myelin sheath maintenance. May play a role in iron uptake and iron homeostasis. Soluble oligomers are toxic to cultured neuroblastoma cells and induce apoptosis (in vitro). Association with GPC1 (via its heparan sulfate chains) targets PRNP to lipid rafts. Also provides Cu(2+) or Zn(2+) for the ascorbate-mediated GPC1 deaminase degradation of its heparan sulfate side chains. This is Major prion protein (PRNP) from Sus scrofa (Pig).